The primary structure comprises 131 residues: MISDPIADMLTRIRNGVMARHEVVIMPASRMKQYLAKVMKQEGFIAGYEVIGAKPKRQLKIVLRYDEGGASFVSGLERISKPGLRVYVQRGEIPRVYGGLGVAIVSTSKGVMTGSQAWRQGLGGELLCKVW.

The protein belongs to the universal ribosomal protein uS8 family. As to quaternary structure, part of the 30S ribosomal subunit. Contacts proteins S5 and S12.

Its function is as follows. One of the primary rRNA binding proteins, it binds directly to 16S rRNA central domain where it helps coordinate assembly of the platform of the 30S subunit. The protein is Small ribosomal subunit protein uS8 of Dehalococcoides mccartyi (strain CBDB1).